Consider the following 106-residue polypeptide: Large ribosomal subunit protein uL24 (106 aa).

This sequence belongs to the universal ribosomal protein uL24 family. As to quaternary structure, part of the 50S ribosomal subunit.

Functionally, one of two assembly initiator proteins, it binds directly to the 5'-end of the 23S rRNA, where it nucleates assembly of the 50S subunit. Its function is as follows. One of the proteins that surrounds the polypeptide exit tunnel on the outside of the subunit. This Polaromonas sp. (strain JS666 / ATCC BAA-500) protein is Large ribosomal subunit protein uL24.